The chain runs to 353 residues: WAT1-related protein At3g28100 (353 aa).

The next 10 membrane-spanning stretches (helical) occupy residues 12–32 (AVFL…STLF), 43–63 (YAFL…SLFF), 81–101 (IGLL…GIEY), 105–125 (TLAS…AIIF), 137–157 (SVAK…VVLY), 187–207 (WLIG…SFIL), 219–239 (FTVS…IGLV), 252–272 (FDIT…YYVI), 283–303 (LYLA…SAVF), and 308–328 (LYLG…AVMW). In terms of domain architecture, EamA spans 27–155 (GISTLFKVAT…LSLIGALVVV (129 aa)).

It belongs to the drug/metabolite transporter (DMT) superfamily. Plant drug/metabolite exporter (P-DME) (TC 2.A.7.4) family.

It is found in the membrane. This is WAT1-related protein At3g28100 from Arabidopsis thaliana (Mouse-ear cress).